A 196-amino-acid polypeptide reads, in one-letter code: Ribosome maturation factor RimP (196 aa).

The interval 164-196 is disordered; sequence LAPQKPNKPGPKKPGHDKKKPSNEPAAGKPRAE. The segment covering 173-182 has biased composition (basic residues); that stretch reads GPKKPGHDKK.

Belongs to the RimP family.

The protein localises to the cytoplasm. Its function is as follows. Required for maturation of 30S ribosomal subunits. This is Ribosome maturation factor RimP from Xanthomonas campestris pv. campestris (strain 8004).